Consider the following 338-residue polypeptide: Bifunctional methylenetetrahydrofolate dehydrogenase/cyclohydrolase 2, mitochondrial (338 aa).

Residues 89–93 (YVRNK) and 136–138 (VQL) contribute to the substrate site. NAD(+) is bound by residues 205-207 (GRS) and arginine 238. 314-318 (PGGVG) is a substrate binding site.

The protein belongs to the tetrahydrofolate dehydrogenase/cyclohydrolase family. It depends on Mg(2+) as a cofactor. Widely expressed.

Its subcellular location is the mitochondrion inner membrane. The catalysed reaction is (6R)-5,10-methylene-5,6,7,8-tetrahydrofolate + NAD(+) = (6R)-5,10-methenyltetrahydrofolate + NADH. It carries out the reaction (6R)-5,10-methenyltetrahydrofolate + H2O = (6R)-10-formyltetrahydrofolate + H(+). The enzyme catalyses (6R)-5,10-methylene-5,6,7,8-tetrahydrofolate + NADP(+) = (6R)-5,10-methenyltetrahydrofolate + NADPH. It participates in one-carbon metabolism; tetrahydrofolate interconversion. Bifunctional mitochondrial folate-interconverting enzyme that has both NAD/NADP-dependent methylenetetrahydrofolate dehydrogenase and methenyltetrahydrofolate cyclohydrolase activities. In Mus musculus (Mouse), this protein is Bifunctional methylenetetrahydrofolate dehydrogenase/cyclohydrolase 2, mitochondrial.